The chain runs to 264 residues: Diphthine synthase (264 aa).

Residues Leu-10, Asp-87, Val-90, 115–116, Leu-166, Ala-209, and His-234 each bind S-adenosyl-L-methionine; that span reads SI.

The protein belongs to the diphthine synthase family. In terms of assembly, homodimer.

The catalysed reaction is 2-[(3S)-amino-3-carboxypropyl]-L-histidyl-[translation elongation factor 2] + 3 S-adenosyl-L-methionine = diphthine-[translation elongation factor 2] + 3 S-adenosyl-L-homocysteine + 3 H(+). It participates in protein modification; peptidyl-diphthamide biosynthesis. In terms of biological role, S-adenosyl-L-methionine-dependent methyltransferase that catalyzes the trimethylation of the amino group of the modified target histidine residue in translation elongation factor 2 (EF-2), to form an intermediate called diphthine. The three successive methylation reactions represent the second step of diphthamide biosynthesis. This Thermococcus kodakarensis (strain ATCC BAA-918 / JCM 12380 / KOD1) (Pyrococcus kodakaraensis (strain KOD1)) protein is Diphthine synthase.